The following is a 183-amino-acid chain: Ribosome maturation factor RimM (183 aa).

The PRC barrel domain occupies 104–183 (EGDYYWKDLM…TIEVDWDPGF (80 aa)).

Belongs to the RimM family. Binds ribosomal protein uS19.

It is found in the cytoplasm. Functionally, an accessory protein needed during the final step in the assembly of 30S ribosomal subunit, possibly for assembly of the head region. Essential for efficient processing of 16S rRNA. May be needed both before and after RbfA during the maturation of 16S rRNA. It has affinity for free ribosomal 30S subunits but not for 70S ribosomes. This chain is Ribosome maturation factor RimM, found in Salmonella choleraesuis (strain SC-B67).